The sequence spans 400 residues: Nicotinate phosphoribosyltransferase (400 aa).

H220 carries the phosphohistidine; by autocatalysis modification.

It belongs to the NAPRTase family. In terms of processing, transiently phosphorylated on a His residue during the reaction cycle. Phosphorylation strongly increases the affinity for substrates and increases the rate of nicotinate D-ribonucleotide production. Dephosphorylation regenerates the low-affinity form of the enzyme, leading to product release.

It catalyses the reaction nicotinate + 5-phospho-alpha-D-ribose 1-diphosphate + ATP + H2O = nicotinate beta-D-ribonucleotide + ADP + phosphate + diphosphate. The protein operates within cofactor biosynthesis; NAD(+) biosynthesis; nicotinate D-ribonucleotide from nicotinate: step 1/1. In terms of biological role, catalyzes the synthesis of beta-nicotinate D-ribonucleotide from nicotinate and 5-phospho-D-ribose 1-phosphate at the expense of ATP. This chain is Nicotinate phosphoribosyltransferase, found in Salmonella schwarzengrund (strain CVM19633).